Consider the following 631-residue polypeptide: 1-deoxy-D-xylulose-5-phosphate synthase (631 aa).

Thiamine diphosphate contacts are provided by residues histidine 87 and 128-130; that span reads GHS. Mg(2+) is bound at residue aspartate 159. Thiamine diphosphate contacts are provided by residues 160–161, asparagine 188, phenylalanine 295, and glutamate 377; that span reads GA. Mg(2+) is bound at residue asparagine 188.

The protein belongs to the transketolase family. DXPS subfamily. Homodimer. The cofactor is Mg(2+). It depends on thiamine diphosphate as a cofactor.

The catalysed reaction is D-glyceraldehyde 3-phosphate + pyruvate + H(+) = 1-deoxy-D-xylulose 5-phosphate + CO2. The protein operates within metabolic intermediate biosynthesis; 1-deoxy-D-xylulose 5-phosphate biosynthesis; 1-deoxy-D-xylulose 5-phosphate from D-glyceraldehyde 3-phosphate and pyruvate: step 1/1. In terms of biological role, catalyzes the acyloin condensation reaction between C atoms 2 and 3 of pyruvate and glyceraldehyde 3-phosphate to yield 1-deoxy-D-xylulose-5-phosphate (DXP). In Pseudomonas putida (strain ATCC 47054 / DSM 6125 / CFBP 8728 / NCIMB 11950 / KT2440), this protein is 1-deoxy-D-xylulose-5-phosphate synthase.